The primary structure comprises 339 residues: 5-dehydro-2-deoxygluconokinase (339 aa).

It belongs to the carbohydrate kinase PfkB family.

The enzyme catalyses 5-dehydro-2-deoxy-D-gluconate + ATP = 6-phospho-5-dehydro-2-deoxy-D-gluconate + ADP + H(+). It functions in the pathway polyol metabolism; myo-inositol degradation into acetyl-CoA; acetyl-CoA from myo-inositol: step 5/7. Its function is as follows. Catalyzes the phosphorylation of 5-dehydro-2-deoxy-D-gluconate (2-deoxy-5-keto-D-gluconate or DKG) to 6-phospho-5-dehydro-2-deoxy-D-gluconate (DKGP). The polypeptide is 5-dehydro-2-deoxygluconokinase (Clostridium botulinum (strain Alaska E43 / Type E3)).